The sequence spans 604 residues: Putative O-acetyltransferase SAV0974 (604 aa).

11 helical membrane passes run 15–35, 43–63, 85–105, 150–170, 176–196, 212–232, 240–260, 267–287, 310–330, 332–352, and 377–397; these read YMPG…IYHL, GFLG…SLLL, LLPA…LLKS, AIEE…LLTI, IGFI…FIYS, LQTL…KLKN, YVID…FFII, IYDG…ASVV, YSLY…YVDG, IPVY…ELSY, and FIRM…LVGA. Catalysis depends on residues S459, D581, and H584.

This sequence belongs to the acyltransferase 3 family.

The protein localises to the cell membrane. This is Putative O-acetyltransferase SAV0974 from Staphylococcus aureus (strain Mu50 / ATCC 700699).